The primary structure comprises 273 residues: Orotidine 5'-phosphate decarboxylase (273 aa).

K96 functions as the Proton donor in the catalytic mechanism.

The protein belongs to the OMP decarboxylase family. Type 2 subfamily.

The enzyme catalyses orotidine 5'-phosphate + H(+) = UMP + CO2. It participates in pyrimidine metabolism; UMP biosynthesis via de novo pathway; UMP from orotate: step 2/2. In Nocardioides sp. (strain ATCC BAA-499 / JS614), this protein is Orotidine 5'-phosphate decarboxylase.